A 271-amino-acid polypeptide reads, in one-letter code: Bifunctional protein FolD (271 aa).

NADP(+)-binding positions include 154-156 (GRS), serine 181, and isoleucine 222.

Belongs to the tetrahydrofolate dehydrogenase/cyclohydrolase family. In terms of assembly, homodimer.

It carries out the reaction (6R)-5,10-methylene-5,6,7,8-tetrahydrofolate + NADP(+) = (6R)-5,10-methenyltetrahydrofolate + NADPH. The enzyme catalyses (6R)-5,10-methenyltetrahydrofolate + H2O = (6R)-10-formyltetrahydrofolate + H(+). It functions in the pathway one-carbon metabolism; tetrahydrofolate interconversion. Its function is as follows. Catalyzes the oxidation of 5,10-methylenetetrahydrofolate to 5,10-methenyltetrahydrofolate and then the hydrolysis of 5,10-methenyltetrahydrofolate to 10-formyltetrahydrofolate. This Thermotoga petrophila (strain ATCC BAA-488 / DSM 13995 / JCM 10881 / RKU-1) protein is Bifunctional protein FolD.